The sequence spans 302 residues: Protein FdhE homolog (302 aa).

The protein belongs to the FdhE family.

The protein resides in the cytoplasm. Functionally, necessary for formate dehydrogenase activity. The chain is Protein FdhE homolog from Haemophilus influenzae (strain PittGG).